A 37-amino-acid chain; its full sequence is Large ribosomal subunit protein bL36 (37 aa).

Belongs to the bacterial ribosomal protein bL36 family.

In Desulfotalea psychrophila (strain LSv54 / DSM 12343), this protein is Large ribosomal subunit protein bL36.